A 689-amino-acid polypeptide reads, in one-letter code: Protein CFAP20DC (689 aa).

Disordered regions lie at residues 143–179, 217–236, 241–262, 333–424, and 583–660; these read GPPP…TVEK, LPIM…NNNR, LKST…NNTN, SKES…PSEL, and SIST…LSVE. Positions 150–176 are enriched in polar residues; it reads RRSNMRISSETVRSVGSKNNRSCQPST. Residues 343–359 show a composition bias toward polar residues; it reads EESQSVPKDIFTFSSRP. Positions 394–405 are enriched in acidic residues; sequence SEDDFYGGDSSE. The span at 411–421 shows a compositional bias: polar residues; that stretch reads IQGSRGPTTGP. The segment covering 583 to 593 has biased composition (low complexity); it reads SISTSSDDTTT.

This is Protein CFAP20DC (CFAP20DC) from Macaca fascicularis (Crab-eating macaque).